We begin with the raw amino-acid sequence, 794 residues long: MIITRNWLKKYLNLDNISNDQINMALNSLGFEVDSVYDLNSLNSELILGYVEQSKQIPDTHLKLNQVNIGTKSLQIVCGASNVDANQFVVIAPINATIANGLTLTSKKIQNYESQGMICALNEIGIDLSVINKEDQLKIYNVSDKNLDLKKYIGSDVKQIIGLDDYLFEIDLTLNRSDCLASFQILKELANYFDLKIKNLDNNFSDFKKNNLDLKIDLANQVKDQIKTISYSYFELNNKNDKLDSKDEIFLKLNQINSSNHSITNLSLISTLSTAQTHILIDLDKLKSSNLKLEFINHDNKELLCLTNNNKLVNIIGLDTQNEFNVDNNSKNVLNIMLNIEPNLMRKQQKLLNISNTYLQRYIKPINPNLFNLANQTFSNLLNDYQLINKAYEVKILKQTFKNKQSLEIKLNEINDLLGTNLTIKQIKSLFKHLDFKITNKDDLLDFQIDQNRIDITSKNDLCEEVARLYSYDKIDEIPLSFTSFKKAKNLNLKLENKLTNYLIGLGFNNTKTYSLTSLNEAKYWNLFNISEFINLVSPLSNLRQTYRTNLSKSLIDVAIFNHSINNKELKLFEIADIYDLNNLKQRHLVFLTSNHIYKNSLNQQLIENNFYYNKEILENIFNLYNLDLSEIQYQSDLNLIKEIHPYINTTIYYQNQLIGYLYKLNPKFESENKLNPTFVCEINLDILNQFKNSFIEAKTLSKFQSSSRDLTIEISNDLTYQKVLFNALSDVKYLKSHKIVDLYLDDNLIKNNTKALTIQFVFNDLEHQLTENEINQEFEKIIKNIKQMKVVIR.

The region spanning Asn40–Lys158 is the tRNA-binding domain. Residues Lys402–Glu477 enclose the B5 domain. Mg(2+) contacts are provided by Asp455, Asp461, Glu464, and Glu465. The FDX-ACB domain occupies Ser702 to Arg794.

This sequence belongs to the phenylalanyl-tRNA synthetase beta subunit family. Type 1 subfamily. In terms of assembly, tetramer of two alpha and two beta subunits. Mg(2+) serves as cofactor.

It localises to the cytoplasm. It carries out the reaction tRNA(Phe) + L-phenylalanine + ATP = L-phenylalanyl-tRNA(Phe) + AMP + diphosphate + H(+). In Mycoplasma mycoides subsp. mycoides SC (strain CCUG 32753 / NCTC 10114 / PG1), this protein is Phenylalanine--tRNA ligase beta subunit.